Here is a 122-residue protein sequence, read N- to C-terminus: Atrial gland peptide B (122 aa).

The signal sequence occupies residues 1–21 (MKANTMFIILCLTLSTLCVSS). Residues 22 to 34 (QFTSVLGKIFVTN) constitute a propeptide that is removed on maturation. I69 carries the post-translational modification Isoleucine amide. Positions 73-122 (AAGGMEQSEGQNPETKSHSWRERSVLTPSLLSLGESLESGISKRISINQD) are excised as a propeptide. Residues 74 to 95 (AGGMEQSEGQNPETKSHSWRER) are disordered.

Belongs to the molluscan ELH family.

It is found in the secreted. Its function is as follows. The atrial gland peptide A and peptide B precursors are the source of the 2 peptides that, upon release from this reproductive system gland, initiate the egg-laying process by exciting the bag cell neurons. These neurons, clustered in neural connectives near the abdominal ganglion, in turn release other peptides that act directly on the ganglion and also, via the circulating hemolymph, on many other organs to control the physiological processes of egg-laying. One of these other peptides is the egg-laying hormone. The sequence is that of Atrial gland peptide B from Aplysia californica (California sea hare).